A 447-amino-acid chain; its full sequence is Glutamine synthetase (447 aa).

The GS beta-grasp domain occupies 20-105 (RDVKFIRTQF…ILGDVYLPDG (86 aa)). In terms of domain architecture, GS catalytic spans 112 to 447 (PRYVLKTAIK…WELSRYLSML (336 aa)). Mg(2+)-binding residues include glutamate 135 and glutamate 137. ATP is bound at residue glutamate 187. Positions 192 and 199 each coordinate Mg(2+). L-glutamate is bound by residues 243 to 244 (NG) and glycine 244. Histidine 248 contacts Mg(2+). Position 252 (serine 252) interacts with ATP. Arginine 301, glutamate 307, and arginine 319 together coordinate L-glutamate. Arginine 319 and arginine 324 together coordinate ATP. Glutamate 336 contacts Mg(2+). An L-glutamate-binding site is contributed by arginine 338.

This sequence belongs to the glutamine synthetase family. As to quaternary structure, homohexamer. Interacts and forms stable complexes with the regulatory protein GlnK1. Mg(2+) is required as a cofactor.

The protein localises to the cytoplasm. It catalyses the reaction L-glutamate + NH4(+) + ATP = L-glutamine + ADP + phosphate + H(+). With respect to regulation, directly stimulated by the effector molecule 2-oxoglutarate. Inhibited by GlnK1. 2-oxoglutarate antagonizes the inhibitory effects of GlnK1, but does not prevent GlnK1/GlnA1 complex formation. In terms of biological role, probably involved in nitrogen metabolism via ammonium assimilation. Catalyzes the ATP-dependent biosynthesis of glutamine from glutamate and ammonia. This Methanosarcina mazei (strain ATCC BAA-159 / DSM 3647 / Goe1 / Go1 / JCM 11833 / OCM 88) (Methanosarcina frisia) protein is Glutamine synthetase.